The chain runs to 808 residues: Probable inorganic carbon transporter subunit DabA (808 aa).

The Zn(2+) site is built by C335, D337, H497, and C512.

This sequence belongs to the inorganic carbon transporter (TC 9.A.2) DabA family. In terms of assembly, forms a complex with DabB. Zn(2+) is required as a cofactor.

The protein resides in the cell inner membrane. Functionally, part of an energy-coupled inorganic carbon pump. The polypeptide is Probable inorganic carbon transporter subunit DabA (Rhodopseudomonas palustris (strain ATCC BAA-98 / CGA009)).